Reading from the N-terminus, the 296-residue chain is Protease HtpX homolog (296 aa).

A run of 2 helical transmembrane segments spans residues 7–27 (TVLL…LVAG) and 29–49 (QGMI…YFFS). Histidine 131 contributes to the Zn(2+) binding site. Glutamate 132 is an active-site residue. Position 135 (histidine 135) interacts with Zn(2+). 2 consecutive transmembrane segments (helical) span residues 141–161 (ILIS…ANMA) and 178–198 (IASI…ATLI). Glutamate 207 contributes to the Zn(2+) binding site.

This sequence belongs to the peptidase M48B family. The cofactor is Zn(2+).

It is found in the cell inner membrane. The chain is Protease HtpX homolog from Sulfurihydrogenibium sp. (strain YO3AOP1).